Consider the following 246-residue polypeptide: UDP-2,3-diacylglucosamine hydrolase (246 aa).

The Mn(2+) site is built by Asp-8, His-10, Asp-41, Asn-79, and His-114. A substrate-binding site is contributed by 79 to 80; the sequence is NR. Asp-122, Ser-160, Asn-164, Lys-167, and His-195 together coordinate substrate. Residues His-195 and His-197 each contribute to the Mn(2+) site.

The protein belongs to the LpxH family. Mn(2+) serves as cofactor.

The protein localises to the cell inner membrane. The catalysed reaction is UDP-2-N,3-O-bis[(3R)-3-hydroxytetradecanoyl]-alpha-D-glucosamine + H2O = 2-N,3-O-bis[(3R)-3-hydroxytetradecanoyl]-alpha-D-glucosaminyl 1-phosphate + UMP + 2 H(+). The protein operates within glycolipid biosynthesis; lipid IV(A) biosynthesis; lipid IV(A) from (3R)-3-hydroxytetradecanoyl-[acyl-carrier-protein] and UDP-N-acetyl-alpha-D-glucosamine: step 4/6. In terms of biological role, hydrolyzes the pyrophosphate bond of UDP-2,3-diacylglucosamine to yield 2,3-diacylglucosamine 1-phosphate (lipid X) and UMP by catalyzing the attack of water at the alpha-P atom. Involved in the biosynthesis of lipid A, a phosphorylated glycolipid that anchors the lipopolysaccharide to the outer membrane of the cell. The protein is UDP-2,3-diacylglucosamine hydrolase of Chromohalobacter salexigens (strain ATCC BAA-138 / DSM 3043 / CIP 106854 / NCIMB 13768 / 1H11).